Here is a 132-residue protein sequence, read N- to C-terminus: Small ribosomal subunit protein uS8 (132 aa).

This sequence belongs to the universal ribosomal protein uS8 family. As to quaternary structure, part of the 30S ribosomal subunit. Contacts proteins S5 and S12.

Functionally, one of the primary rRNA binding proteins, it binds directly to 16S rRNA central domain where it helps coordinate assembly of the platform of the 30S subunit. The chain is Small ribosomal subunit protein uS8 from Streptococcus equi subsp. equi (strain 4047).